A 364-amino-acid polypeptide reads, in one-letter code: Spermidine/putrescine import ATP-binding protein PotA (364 aa).

In terms of domain architecture, ABC transporter spans 5 to 235 (LSFKDVSKGF…PVNRFVADFI (231 aa)). 37 to 44 (GPSGCGKT) provides a ligand contact to ATP.

It belongs to the ABC transporter superfamily. Spermidine/putrescine importer (TC 3.A.1.11.1) family. In terms of assembly, the complex is composed of two ATP-binding proteins (PotA), two transmembrane proteins (PotB and PotC) and a solute-binding protein (PotD).

It localises to the cell membrane. The enzyme catalyses ATP + H2O + polyamine-[polyamine-binding protein]Side 1 = ADP + phosphate + polyamineSide 2 + [polyamine-binding protein]Side 1.. Functionally, part of the ABC transporter complex PotABCD involved in spermidine/putrescine import. Responsible for energy coupling to the transport system. This is Spermidine/putrescine import ATP-binding protein PotA from Staphylococcus epidermidis (strain ATCC 35984 / DSM 28319 / BCRC 17069 / CCUG 31568 / BM 3577 / RP62A).